We begin with the raw amino-acid sequence, 392 residues long: Caveolae-associated protein 1 (392 aa).

Residue Met-1 is modified to N-acetylmethionine. A compositionally biased stretch (basic and acidic residues) spans 1–10; sequence MEDVTLHIVE. The disordered stretch occupies residues 1–45; that stretch reads MEDVTLHIVERPYSGYPDASSEGPEPTPGEARATEEPSGTGSDEL. Residues 1 to 100 are required for homotrimerization and for interaction with CAVIN2 and CAVIN3; sequence MEDVTLHIVE…IQGELSKLGK (100 aa). A phosphoserine mark is found at Ser-21 and Ser-38. Thr-40 is subject to Phosphothreonine. Phosphoserine is present on residues Ser-42 and Ser-48. The tract at residues 54-64 is nuclear export signal; sequence VLVLSLLDKII. Positions 55 to 77 are leucine-zipper 1; the sequence is LVLSLLDKIIGAVDQIQLTQAQL. Residue Lys-118 forms a Glycyl lysine isopeptide (Lys-Gly) (interchain with G-Cter in SUMO2) linkage. Ser-120 is subject to Phosphoserine. Residue Lys-124 forms a Glycyl lysine isopeptide (Lys-Gly) (interchain with G-Cter in SUMO2) linkage. The segment at 138-154 is nuclear localization signal; that stretch reads KKLEVNEAELLRRRNFK. Tyr-158 carries the post-translational modification Phosphotyrosine. A Glycyl lysine isopeptide (Lys-Gly) (interchain with G-Cter in SUMO1); alternate cross-link involves residue Lys-163. Lys-163 is covalently cross-linked (Glycyl lysine isopeptide (Lys-Gly) (interchain with G-Cter in SUMO2); alternate). A Glycyl lysine isopeptide (Lys-Gly) (interchain with G-Cter in SUMO2) cross-link involves residue Lys-167. Residues 168–188 form a leucine-zipper 2 region; sequence LSVSKSLKESEALPEKEGDEL. Ser-169 and Ser-171 each carry phosphoserine. Residue Lys-172 forms a Glycyl lysine isopeptide (Lys-Gly) (interchain with G-Cter in SUMO2) linkage. Ser-173 and Ser-177 each carry phosphoserine. Positions 173–183 are enriched in basic and acidic residues; sequence SLKESEALPEK. The tract at residues 173–198 is disordered; that stretch reads SLKESEALPEKEGDELGEGERPEEDA. Residues 184–198 are compositionally biased toward acidic residues; the sequence is EGDELGEGERPEEDA. A coiled-coil region spans residues 201–284; it reads IELSSDEAVE…RMNKLGTRLV (84 aa). Phosphoserine occurs at positions 204 and 205. The nuclear localization signal stretch occupies residues 235–251; sequence KKAFSKEKMEKTKVRTR. The tract at residues 259-299 is leucine-zipper 3; sequence LKTKENLEKTRHTLEKRMNKLGTRLVPVERREKLKTSRDKL. Ser-302 bears the Phosphoserine mark. Thr-304 bears the Phosphothreonine mark. At Tyr-310 the chain carries Phosphotyrosine. Lys-328 is covalently cross-linked (Glycyl lysine isopeptide (Lys-Gly) (interchain with G-Cter in SUMO2)). The disordered stretch occupies residues 347 to 367; that stretch reads GPDDDEVGAERGAETDLLRGS. Residues 354–363 are compositionally biased toward basic and acidic residues; the sequence is GAERGAETDL. A phosphoserine mark is found at Ser-367, Ser-368, Ser-381, Ser-389, and Ser-391.

The protein belongs to the CAVIN family. Component of the CAVIN complex composed of CAVIN1, CAVIN2, CAVIN3 and CAVIN4. Interacts with RNA polymerase I subunit POLR1A/RPA1 and TTF1. Binds the 3' end of pre-rRNA. Interacts with transcription factor ZNF148. Interacts with LIPE in the adipocyte cytoplasm. Interacts with CAV1, CAV3, CAVIN2, CAVIN3 and CAVIN4. Phosphorylated. Present in active and inactive forms. Changes in phosphorylation pattern may alter activity. Phosphorylation at Tyr-158 is essential for its function in the regulation of ribosomal transcriptional activity. Post-translationally, monoubiquitinated. As to expression, expressed in the adipocyte (at protein level). Expressed in all striated and smooth muscles tested including diaphragm, esophageal striated muscle, fibroblast, endocardial endothelium, epicardial mesothelium, intestinal smooth muscle, masseter, soleus muscle, vascular smooth muscle and white gastrocnemius muscle (at protein level). Expressed in the endothelium and perineural sheath (at protein level). Not expressed in hepatocytes.

It is found in the membrane. The protein resides in the caveola. The protein localises to the cell membrane. It localises to the microsome. Its subcellular location is the endoplasmic reticulum. It is found in the cytoplasm. The protein resides in the cytosol. The protein localises to the mitochondrion. It localises to the nucleus. In terms of biological role, plays an important role in caveolae formation and organization. Essential for the formation of caveolae in all tissues. Core component of the CAVIN complex which is essential for recruitment of the complex to the caveolae in presence of calveolin-1 (CAV1). Essential for normal oligomerization of CAV1. Promotes ribosomal transcriptional activity in response to metabolic challenges in the adipocytes and plays an important role in the formation of the ribosomal transcriptional loop. Dissociates transcription complexes paused by DNA-bound TTF1, thereby releasing both RNA polymerase I and pre-RNA from the template. The caveolae biogenesis pathway is required for the secretion of proteins such as GASK1A. The sequence is that of Caveolae-associated protein 1 from Rattus norvegicus (Rat).